A 287-amino-acid chain; its full sequence is Bifunctional protein FolD 1 (287 aa).

NADP(+) is bound by residues G170–S172 and S195.

It belongs to the tetrahydrofolate dehydrogenase/cyclohydrolase family. Homodimer.

It catalyses the reaction (6R)-5,10-methylene-5,6,7,8-tetrahydrofolate + NADP(+) = (6R)-5,10-methenyltetrahydrofolate + NADPH. The catalysed reaction is (6R)-5,10-methenyltetrahydrofolate + H2O = (6R)-10-formyltetrahydrofolate + H(+). The protein operates within one-carbon metabolism; tetrahydrofolate interconversion. Functionally, catalyzes the oxidation of 5,10-methylenetetrahydrofolate to 5,10-methenyltetrahydrofolate and then the hydrolysis of 5,10-methenyltetrahydrofolate to 10-formyltetrahydrofolate. This Streptomyces avermitilis (strain ATCC 31267 / DSM 46492 / JCM 5070 / NBRC 14893 / NCIMB 12804 / NRRL 8165 / MA-4680) protein is Bifunctional protein FolD 1.